We begin with the raw amino-acid sequence, 339 residues long: Nicotinate-nucleotide--dimethylbenzimidazole phosphoribosyltransferase (339 aa).

Catalysis depends on Glu-306, which acts as the Proton acceptor.

Belongs to the CobT family.

The catalysed reaction is 5,6-dimethylbenzimidazole + nicotinate beta-D-ribonucleotide = alpha-ribazole 5'-phosphate + nicotinate + H(+). It functions in the pathway nucleoside biosynthesis; alpha-ribazole biosynthesis; alpha-ribazole from 5,6-dimethylbenzimidazole: step 1/2. Catalyzes the synthesis of alpha-ribazole-5'-phosphate from nicotinate mononucleotide (NAMN) and 5,6-dimethylbenzimidazole (DMB). In Brucella melitensis biotype 1 (strain ATCC 23456 / CCUG 17765 / NCTC 10094 / 16M), this protein is Nicotinate-nucleotide--dimethylbenzimidazole phosphoribosyltransferase.